Reading from the N-terminus, the 1286-residue chain is Galactose/N-acetyl-D-galactosamine lectin heavy subunit 2 (1286 aa).

An N-terminal signal peptide occupies residues M1 to A15. The Extracellular portion of the chain corresponds to D16–T1227. N200, N331, N384, N462, N652, N883, N1197, and N1207 each carry an N-linked (GlcNAc...) asparagine glycan. The helical transmembrane segment at T1228–F1248 threads the bilayer. Residues K1249–G1286 are Cytoplasmic-facing.

In terms of assembly, heterodimer composed of a 170 kDa heavy subunit (hgl) and a 31/35 kDa light subunit (lgl); disulfide-linked. In terms of processing, N-glycosylated.

The protein resides in the cell membrane. Functionally, lectin which binds galactose and N-acetyl-D-galactosamine of host glycoproteins and thus mediates adhesion to host cells. Mediates adherence to host colonic mucins, an essential step for pathogenic tissue invasion. In Entamoeba histolytica (strain ATCC 30459 / HM-1:IMSS / ABRM), this protein is Galactose/N-acetyl-D-galactosamine lectin heavy subunit 2.